A 310-amino-acid chain; its full sequence is Taste receptor type 2 member 125 (310 aa).

Residues Met-1–Gly-2 lie on the Extracellular side of the membrane. A helical transmembrane segment spans residues Ile-3 to Ala-23. Over Asn-24–Gln-46 the chain is Cytoplasmic. The chain crosses the membrane as a helical span at residues Ile-47–Leu-67. Residues Ile-68 to Asn-87 lie on the Extracellular side of the membrane. A helical transmembrane segment spans residues Ile-88 to Phe-108. At Leu-109–Lys-128 the chain is on the cytoplasmic side. The chain crosses the membrane as a helical span at residues Val-129–Asn-149. The Extracellular portion of the chain corresponds to Met-150–Thr-185. 3 N-linked (GlcNAc...) asparagine glycosylation sites follow: Asn-162, Asn-171, and Asn-183. Residues Phe-186–Trp-206 traverse the membrane as a helical segment. The Cytoplasmic segment spans residues Arg-207–Gln-232. A helical transmembrane segment spans residues Met-233 to Trp-253. Residues Thr-254 to Asn-261 lie on the Extracellular side of the membrane. Residues Asn-262–Leu-282 traverse the membrane as a helical segment. The Cytoplasmic portion of the chain corresponds to Arg-283–Pro-310.

It belongs to the G-protein coupled receptor T2R family.

The protein resides in the membrane. In terms of biological role, putative taste receptor which may play a role in the perception of bitterness. The sequence is that of Taste receptor type 2 member 125 from Rattus norvegicus (Rat).